The sequence spans 459 residues: ATP synthase subunit beta 1 (459 aa).

148-155 contributes to the ATP binding site; it reads GGAGVGKT.

This sequence belongs to the ATPase alpha/beta chains family. In terms of assembly, F-type ATPases have 2 components, CF(1) - the catalytic core - and CF(0) - the membrane proton channel. CF(1) has five subunits: alpha(3), beta(3), gamma(1), delta(1), epsilon(1). CF(0) has three main subunits: a(1), b(2) and c(9-12). The alpha and beta chains form an alternating ring which encloses part of the gamma chain. CF(1) is attached to CF(0) by a central stalk formed by the gamma and epsilon chains, while a peripheral stalk is formed by the delta and b chains.

Its subcellular location is the cell inner membrane. It catalyses the reaction ATP + H2O + 4 H(+)(in) = ADP + phosphate + 5 H(+)(out). Its function is as follows. Produces ATP from ADP in the presence of a proton gradient across the membrane. The catalytic sites are hosted primarily by the beta subunits. In Nitrosospira multiformis (strain ATCC 25196 / NCIMB 11849 / C 71), this protein is ATP synthase subunit beta 1.